The sequence spans 554 residues: 3-(3-hydroxy-phenyl)propionate/3-hydroxycinnamic acid hydroxylase (554 aa).

Residues 17–46 (QVAI…VVEK) and 285–295 (FRIDRVLLAGD) each bind FAD.

Belongs to the PheA/TfdB FAD monooxygenase family. FAD serves as cofactor.

It carries out the reaction 3-(3-hydroxyphenyl)propanoate + NADH + O2 + H(+) = 3-(2,3-dihydroxyphenyl)propanoate + NAD(+) + H2O. The catalysed reaction is (2E)-3-(3-hydroxyphenyl)prop-2-enoate + NADH + O2 + H(+) = (2E)-3-(2,3-dihydroxyphenyl)prop-2-enoate + NAD(+) + H2O. It participates in aromatic compound metabolism; 3-phenylpropanoate degradation. Catalyzes the insertion of one atom of molecular oxygen into position 2 of the phenyl ring of 3-(3-hydroxyphenyl)propionate (3-HPP) and hydroxycinnamic acid (3HCI). In Escherichia coli (strain K12 / DH10B), this protein is 3-(3-hydroxy-phenyl)propionate/3-hydroxycinnamic acid hydroxylase.